Reading from the N-terminus, the 202-residue chain is Pyridoxal 5'-phosphate synthase subunit PdxT (202 aa).

49–51 (GES) serves as a coordination point for L-glutamine. Residue Cys-81 is the Nucleophile of the active site. Residues Arg-110 and 139-140 (IR) each bind L-glutamine. Active-site charge relay system residues include His-182 and Glu-184.

Belongs to the glutaminase PdxT/SNO family. In terms of assembly, in the presence of PdxS, forms a dodecamer of heterodimers. Only shows activity in the heterodimer.

It catalyses the reaction aldehydo-D-ribose 5-phosphate + D-glyceraldehyde 3-phosphate + L-glutamine = pyridoxal 5'-phosphate + L-glutamate + phosphate + 3 H2O + H(+). It carries out the reaction L-glutamine + H2O = L-glutamate + NH4(+). It participates in cofactor biosynthesis; pyridoxal 5'-phosphate biosynthesis. In terms of biological role, catalyzes the hydrolysis of glutamine to glutamate and ammonia as part of the biosynthesis of pyridoxal 5'-phosphate. The resulting ammonia molecule is channeled to the active site of PdxS. This Rhodococcus opacus (strain B4) protein is Pyridoxal 5'-phosphate synthase subunit PdxT.